A 223-amino-acid chain; its full sequence is Endonuclease V (223 aa).

Mg(2+) contacts are provided by Asp45 and Asp113.

Belongs to the endonuclease V family. The cofactor is Mg(2+).

The protein localises to the cytoplasm. The catalysed reaction is Endonucleolytic cleavage at apurinic or apyrimidinic sites to products with a 5'-phosphate.. Its function is as follows. DNA repair enzyme involved in the repair of deaminated bases. Selectively cleaves double-stranded DNA at the second phosphodiester bond 3' to a deoxyinosine leaving behind the intact lesion on the nicked DNA. The protein is Endonuclease V of Dehalococcoides mccartyi (strain ATCC BAA-2100 / JCM 16839 / KCTC 5957 / BAV1).